Here is a 754-residue protein sequence, read N- to C-terminus: MWKLLPAAGPAGGEPYRLLTGVEYVVGRKNCAILIEKDQSISRNHAVLTANFSVTNLSQTDEIPVLALKDNSKYGTFVNEEKMQNGFSRTLKSGDSITFGVFESKFRIEYEPLVACSSCLDVSGKTALNQAILQLGGFTVNNWTEECTHLVMVSVKVTIKTICALICGRPIVKPEYFTEFLKAVQSKKQLPQIESFYPPLDEPSIGSKNVDLSGRQERKQIFKGKTFIFLNAKQHKKLSSAVVFGGGEARLITEENEEEHNFFLAPGTCVVDTGITNSQTLIPDCQKKWIQSIMDMLQRQGLRPIPEAEIGLAVIFMTTKNYCDPQGHPSTGLKTTTPGPSLSQGLSVDEKLMPSAPVNTTTYVADTESEQADTWDLSERPKEIKVSKMEQKFRMLSQDAPTVKESCKTSSNNNSMVSNTLAKMRIPNYQLSPTKLPSINKSKDRASQQQQTNSIRNYFQPSTKKRERDEENQEMSSCKSARIEMSCSLLEQTQPAIPLLWKNKEQHLSENEPVDTNSDNNLFTDTDLISTVKNSASKSHAAEKLRSNKKREMHDVTIEDEVLEQLLKDTKPELEIEVKVQKQEEDVNIRKRPRMDVETNDTFSDKAVPESSKISQENEIGKKHELKEESLWSTKEISNNDKLQDHSEMLPKKLLLTEFRSLVIKNSTSRNPSGINGDYGLLKNFKKFKKVTYPGAGKLPHIIGGSDLIAHHARKNTELEEWLRQEMEVQNQHAKEESLADDLFRYNPYLKRRR.

An FHA domain is found at 24–83 (YVVGRKNCAILIEKDQSISRNHAVLTANFSVTNLSQTDEIPVLALKDNSKYGTFVNEEKM). 2 BRCT domains span residues 105–181 (KFRI…TEFL) and 224–315 (GKTF…LAVI). Residues 111 to 328 (EPLVACSSCL…TKNYCDPQGH (218 aa)) are mediates interaction with SP100. The interaction with MTOR, MAPKAP1 and RICTOR stretch occupies residues 221–402 (IFKGKTFIFL…FRMLSQDAPT (182 aa)). Ser278 carries the phosphoserine; by ATM modification. The interval 326-346 (QGHPSTGLKTTTPGPSLSQGL) is disordered. The span at 328–346 (HPSTGLKTTTPGPSLSQGL) shows a compositional bias: polar residues. Thr337 carries the phosphothreonine modification. The residue at position 343 (Ser343) is a Phosphoserine; by ATM. Phosphoserine is present on Ser347. Lys388 is subject to N6-lactoyllysine. Disordered stretches follow at residues 396 to 415 (LSQD…NNNS) and 431 to 475 (LSPT…NQEM). The residue at position 397 (Ser397) is a Phosphoserine. Thr402 is subject to Phosphothreonine. Polar residues-rich tracts occupy residues 431 to 440 (LSPTKLPSIN) and 447 to 462 (SQQQ…FQPS). Ser432 is modified (phosphoserine). Residue Lys435 forms a Glycyl lysine isopeptide (Lys-Gly) (interchain with G-Cter in ubiquitin) linkage. The Nuclear localization signal signature appears at 461 to 467 (PSTKKRE). Ser509 and Ser518 each carry phosphoserine. Glycyl lysine isopeptide (Lys-Gly) (interchain with G-Cter in SUMO2) cross-links involve residues Lys571 and Lys582. Phosphoserine occurs at positions 615 and 673. Glycyl lysine isopeptide (Lys-Gly) (interchain with G-Cter in ubiquitin) cross-links involve residues Lys686, Lys690, and Lys735. Positions 740–749 (ADDLFRYNPY) match the FxF/Y motif motif.

The protein belongs to the Nibrin family. Component of the MRN complex composed of two heterodimers RAD50 and MRE11 associated with a single NBN. The MRN complexes dimerize on DNA to form joined MRN-MRN oligomers required for DNA double-strand break repair. The MRN complexes dimerize on DNA to form joined MRN-MRN oligomers required for DNA double-strand break repair. As part of the MRN complex, interacts with MCM9; the interaction recruits the complex to DNA repair sites. Component of the BASC complex, at least composed of BRCA1, MSH2, MSH6, MLH1, ATM, BLM, RAD50, MRE11 and NBN. Interacts with histone H2AX; this requires phosphorylation of H2AX on 'Ser-139' and promotes NBN recruitment to DNA damage sites. Interacts with (phosphorylated) MDC1; promoting NBN recruitment to DNA damage sites. Interacts with (phosphorylated) RAD17; promoting NBN recruitment to DNA damage sites. Interacts (via FxF/Y motif) with ATM. Interacts with HJURP. Interacts with INTS3. Interacts with KPNA2. Interacts with TERF2; interaction is disrupted upon NBN phosphorylation by CDK2. Interacts with (phosphorylated) RBBP8/CtIP; the interaction links the role of the MRN complex in DNA double-strand break sensing to resection. Interacts with SP100; recruits NBN to PML bodies. Interacts with ATF2. Interacts with MTOR, MAPKAP1 isoform 2 and RICTOR; indicative for an association with the mTORC2 complex. Interacts with MRNIP. Interacts with UFL1; promoting UFL1 recruitment to double-strand breaks following DNA damage. Interacts with CYREN (via XLF motif). Phosphorylated by ATM in response of ionizing radiation, and such phosphorylation is responsible intra-S phase checkpoint control and telomere maintenance. Phosphorylated at Ser-432 by CDK2 in S/G2 phases abolishes interaction with TERF2, enabling DCLRE1B/Apollo recruitment to telomeres. Phosphorylation at Ser-432 in response to dysfunctional telomeres promotes non-homologous end joining repair at telomeres, while dephosphorylation by PPP1CA promotes microhomology-mediated end-joining (MMEJ) repair. Post-translationally, ubiquitinated at Lys-435 via 'Lys-6'-linked ubiquitin chains by RNF8, promoting NBN recruitment to DNA double-strand breaks (DSBs). Ubiquitinated at Lys-686 and Lys-689 via 'Lys-63'-linked ubiquitin chains by PELI1: ubiquitination takes place following PELI1 phosphorylation and promotes ATM activation and DNA repair. Ubiquitinated at Lys-735 via 'Lys-63'-linked ubiquitin chains by the SCF(SKP2) complex: ubiquitination takes place following SKP2 phosphorylation and promotes ATM activation and DNA repair. In terms of processing, lactylation at Lys-388 by KAT5 in response to DNA damage promotes recruitment of the MRN complex to DNA damage sites. Delactylated by HDAC3.

The protein resides in the nucleus. Its subcellular location is the chromosome. It localises to the PML body. The protein localises to the telomere. In terms of biological role, component of the MRN complex, which plays a central role in double-strand break (DSB) repair, DNA recombination, maintenance of telomere integrity and meiosis. The MRN complex is involved in the repair of DNA double-strand breaks (DSBs) via homologous recombination (HR), an error-free mechanism which primarily occurs during S and G2 phases. The complex (1) mediates the end resection of damaged DNA, which generates proper single-stranded DNA, a key initial steps in HR, and is (2) required for the recruitment of other repair factors and efficient activation of ATM and ATR upon DNA damage. The MRN complex possesses single-strand endonuclease activity and double-strand-specific 3'-5' exonuclease activity, which are provided by MRE11, to initiate end resection, which is required for single-strand invasion and recombination. Within the MRN complex, NBN acts as a protein-protein adapter, which specifically recognizes and binds phosphorylated proteins, promoting their recruitment to DNA damage sites. Recruits MRE11 and RAD50 components of the MRN complex to DSBs in response to DNA damage. Promotes the recruitment of PI3/PI4-kinase family members ATM, ATR, and probably DNA-PKcs to the DNA damage sites, activating their functions. Mediates the recruitment of phosphorylated RBBP8/CtIP to DSBs, leading to cooperation between the MRN complex and RBBP8/CtIP to initiate end resection. RBBP8/CtIP specifically promotes the endonuclease activity of the MRN complex to clear DNA ends containing protein adducts. The MRN complex is also required for the processing of R-loops. NBN also functions in telomere length maintenance via its interaction with TERF2: interaction with TERF2 during G1 phase preventing recruitment of DCLRE1B/Apollo to telomeres. NBN also promotes DNA repair choice at dysfunctional telomeres: NBN phosphorylation by CK2 promotes non-homologous end joining repair at telomeres, while unphosphorylated NBN promotes microhomology-mediated end-joining (MMEJ) repair. Enhances AKT1 phosphorylation possibly by association with the mTORC2 complex. The protein is Nibrin (NBN) of Pongo abelii (Sumatran orangutan).